The primary structure comprises 445 residues: Acyl-CoA Delta-4 desaturase (445 aa).

The Cytochrome b5 heme-binding domain occupies 19–96 (AGVYTWEEVQ…MKPLLVGELA (78 aa)). The next 4 helical transmembrane spans lie at 132 to 152 (LFFL…LLMV), 153 to 173 (WHWG…ATAQ), 266 to 286 (YFFL…NIMM), and 307 to 327 (YMLC…MMFA).

It belongs to the fatty acid desaturase type 1 family.

It is found in the membrane. It catalyses the reaction (8Z,11Z,14Z,17Z)-eicosatetraenoyl-CoA + 2 Fe(II)-[cytochrome b5] + O2 + 2 H(+) = (5Z,8Z,11Z,14Z,17Z)-eicosapentaenoyl-CoA + 2 Fe(III)-[cytochrome b5] + 2 H2O. It carries out the reaction (7Z,10Z,13Z,16Z)-docosatetraenoyl-CoA + 2 Fe(II)-[cytochrome b5] + O2 + 2 H(+) = (4Z,7Z,10Z,13Z,16Z)-docosapentaenoyl-CoA + 2 Fe(III)-[cytochrome b5] + 2 H2O. The catalysed reaction is (7Z,10Z,13Z,16Z,19Z)-docosapentaenoyl-CoA + 2 Fe(II)-[cytochrome b5] + O2 + 2 H(+) = (4Z,7Z,10Z,13Z,16Z,19Z)-docosahexaenoyl-CoA + 2 Fe(III)-[cytochrome b5] + 2 H2O. Its pathway is lipid metabolism; polyunsaturated fatty acid biosynthesis. In terms of biological role, fatty acid desaturase with bifunctional delta-4 and delta-5 activities. Component of a lipid metabolic pathway that catalyzes the biosynthesis of polyunsaturated fatty acids (PUFA) with preference toward n-3 substrates and Delta(4)function. The chain is Acyl-CoA Delta-4 desaturase from Siganus canaliculatus (White-spotted spinefoot).